Here is a 180-residue protein sequence, read N- to C-terminus: MDAQERSERPDPATDPGRGRRLGIDVGSVRIGVASSDPDGILATPVETVPRAKKVPRGTVSPDIARIAEIVREYEAVEVIVGLPRTLRGEKGSAATAAIAFAERLRREIPDVAIRLSDERLTTVSAARALRDSGVRARGQRQVIDQAAAVSILQGWLDERSAVMRSVGEAESATSSGDDA.

The span at 1–12 (MDAQERSERPDP) shows a compositional bias: basic and acidic residues. A disordered region spans residues 1–23 (MDAQERSERPDPATDPGRGRRLG).

This sequence belongs to the YqgF nuclease family.

It is found in the cytoplasm. Functionally, could be a nuclease involved in processing of the 5'-end of pre-16S rRNA. This chain is Putative pre-16S rRNA nuclease, found in Nocardia farcinica (strain IFM 10152).